We begin with the raw amino-acid sequence, 831 residues long: V-type proton ATPase 116 kDa subunit a1 (831 aa).

At 1–388 (MGELFRSEEM…DAYGIGSYRE (388 aa)) the chain is on the cytoplasmic side. A helical transmembrane segment spans residues 389-407 (INPAPYTIITFPFLFAVMF). Topologically, residues 408–409 (GD) are vacuolar. Residues 410–426 (FGHGILMTLFAVWMVVR) traverse the membrane as a helical segment. At 427–441 (ESRILSQKIDNELFS) the chain is on the cytoplasmic side. Residues 442 to 471 (MMFSGRYIILLMGLFSTYTGLIYNDCFSKA) traverse the membrane as a helical segment. The Vacuolar portion of the chain corresponds to 472 to 534 (LNLFGSSWSV…ATNKLTFLNS (63 aa)). A helical transmembrane segment spans residues 535-554 (FKMKMSVILGIIHMIFGVAL). Topologically, residues 555–572 (SVLNHIYFKKPLNIYLSF) are cytoplasmic. A helical transmembrane segment spans residues 573–593 (IPEMIFMTTLFGYLVILIIYK). Residues 594–638 (WCAYDVSTSMVAPSLLIHFINMFLFSYQDTSLPMLYKGQMGLQCF) are Vacuolar-facing. The chain crosses the membrane as a helical span at residues 639–658 (LVVCAIICVPWMLVLKPLIL). Topologically, residues 659-718 (RRQYLRRKHLGTHNFGGIRVGNGPTEEDAEIIQHDQLSMHSDEEEEFDFGDTVVHQAIHT) are cytoplasmic. The chain crosses the membrane as a helical span at residues 719-743 (IEYCLGCISNTASYLRLWALSLAHA). Residues 744–764 (QLSEVLWTMVMHIGLNIRSLG) are Vacuolar-facing. A helical membrane pass occupies residues 765-803 (GGIALVFIFSAFATLTIAILLIMEGLSAFLHALRLHWVE). The Cytoplasmic segment spans residues 804–831 (FRNKFYMGTGFKFLPFSFETIWEGKFDD).

The protein belongs to the V-ATPase 116 kDa subunit family. V-ATPase is a heteromultimeric enzyme made up of two complexes: the ATP-hydrolytic V1 complex and the proton translocation V0 complex. The V1 complex consists of three catalytic AB heterodimers that form a heterohexamer, three peripheral stalks each consisting of EG heterodimers, one central rotor including subunits D and F, and the regulatory subunits C and H. The proton translocation complex V0 consists of the proton transport subunit a, a ring of proteolipid subunits c9c'', rotary subunit d, subunits e and f, and two accessory subunits.

It localises to the cytoplasmic vesicle. Its subcellular location is the clathrin-coated vesicle membrane. The protein resides in the secretory vesicle. The protein localises to the synaptic vesicle membrane. It is found in the melanosome. Subunit of the V0 complex of vacuolar(H+)-ATPase (V-ATPase), a multisubunit enzyme composed of a peripheral complex (V1) that hydrolyzes ATP and a membrane integral complex (V0) that translocates protons. V-ATPase is responsible for acidifying and maintaining the pH of intracellular compartments and in some cell types, is targeted to the plasma membrane, where it is responsible for acidifying the extracellular environment. Required for assembly and activity of the vacuolar ATPase. This is V-type proton ATPase 116 kDa subunit a1 (atp6v0a1) from Xenopus laevis (African clawed frog).